The primary structure comprises 245 residues: tRNA1(Val) (adenine(37)-N6)-methyltransferase (245 aa).

This sequence belongs to the methyltransferase superfamily. tRNA (adenine-N(6)-)-methyltransferase family.

The protein resides in the cytoplasm. It carries out the reaction adenosine(37) in tRNA1(Val) + S-adenosyl-L-methionine = N(6)-methyladenosine(37) in tRNA1(Val) + S-adenosyl-L-homocysteine + H(+). Specifically methylates the adenine in position 37 of tRNA(1)(Val) (anticodon cmo5UAC). The sequence is that of tRNA1(Val) (adenine(37)-N6)-methyltransferase from Enterobacter sp. (strain 638).